The following is a 102-amino-acid chain: Small ribosomal subunit protein uS10 (102 aa).

This sequence belongs to the universal ribosomal protein uS10 family. Part of the 30S ribosomal subunit.

Functionally, involved in the binding of tRNA to the ribosomes. In Streptococcus equi subsp. zooepidemicus (strain MGCS10565), this protein is Small ribosomal subunit protein uS10.